The primary structure comprises 874 residues: Alanine--tRNA ligase (874 aa).

H563, H567, C665, and H669 together coordinate Zn(2+).

It belongs to the class-II aminoacyl-tRNA synthetase family. Zn(2+) is required as a cofactor.

The protein resides in the cytoplasm. It catalyses the reaction tRNA(Ala) + L-alanine + ATP = L-alanyl-tRNA(Ala) + AMP + diphosphate. Its function is as follows. Catalyzes the attachment of alanine to tRNA(Ala) in a two-step reaction: alanine is first activated by ATP to form Ala-AMP and then transferred to the acceptor end of tRNA(Ala). Also edits incorrectly charged Ser-tRNA(Ala) and Gly-tRNA(Ala) via its editing domain. The sequence is that of Alanine--tRNA ligase from Haemophilus influenzae (strain 86-028NP).